The sequence spans 132 residues: Small ribosomal subunit protein uS8c (132 aa).

This sequence belongs to the universal ribosomal protein uS8 family. In terms of assembly, part of the 30S ribosomal subunit.

The protein resides in the plastid. It is found in the chloroplast. One of the primary rRNA binding proteins, it binds directly to 16S rRNA central domain where it helps coordinate assembly of the platform of the 30S subunit. The polypeptide is Small ribosomal subunit protein uS8c (rps8) (Nandina domestica (Heavenly bamboo)).